Consider the following 361-residue polypeptide: MAGNSIGQHFRVTTFGESHGIALGCIVDGCPPGLTISEADLQVDLDRRRPGTSRYTTQRREPDEVKILSGVFEGKTTGTSIGLLIENTDQRSKDYSDIKDKFRPGHADYTYHQKYGVRDYRGGGRSSARETAMRVAAGAIAKKYLQQEFGIEVRAYLSQMGEVAIDKVDWNEIENNDFFCPDVDKVAAFDELIRELKKEGDSIGAKIQVVATGVPVGLGEPVFDRLDADIAHALMSINAVKGVEIGDGFDVVRQKGSQHRDPLTPQGFRSNHSGGILGGISSGQDIVANIALKPTSSITVPGETIDVNGEPTELITKGRHDPCVGIRAVPIAEAMLAIVLMDHLLRHRGQNQGVVTTTPKI.

NADP(+) contacts are provided by R48 and R54. FMN is bound by residues 125–127 (RSS), 238–239 (NA), G278, 293–297 (KPTSS), and R319.

Belongs to the chorismate synthase family. As to quaternary structure, homotetramer. Requires FMNH2 as cofactor.

The catalysed reaction is 5-O-(1-carboxyvinyl)-3-phosphoshikimate = chorismate + phosphate. It participates in metabolic intermediate biosynthesis; chorismate biosynthesis; chorismate from D-erythrose 4-phosphate and phosphoenolpyruvate: step 7/7. In terms of biological role, catalyzes the anti-1,4-elimination of the C-3 phosphate and the C-6 proR hydrogen from 5-enolpyruvylshikimate-3-phosphate (EPSP) to yield chorismate, which is the branch point compound that serves as the starting substrate for the three terminal pathways of aromatic amino acid biosynthesis. This reaction introduces a second double bond into the aromatic ring system. The sequence is that of Chorismate synthase from Vibrio cholerae serotype O1 (strain ATCC 39541 / Classical Ogawa 395 / O395).